The following is a 444-amino-acid chain: Trigger factor (444 aa).

Residues 160-245 (DMQVTFDFEG…VKQVEKPKLP (86 aa)) form the PPIase FKBP-type domain.

Belongs to the FKBP-type PPIase family. Tig subfamily.

The protein resides in the cytoplasm. It catalyses the reaction [protein]-peptidylproline (omega=180) = [protein]-peptidylproline (omega=0). Functionally, involved in protein export. Acts as a chaperone by maintaining the newly synthesized protein in an open conformation. Functions as a peptidyl-prolyl cis-trans isomerase. This is Trigger factor from Acinetobacter baumannii (strain AB0057).